The primary structure comprises 116 residues: Large ribosomal subunit protein bL19 (116 aa).

It belongs to the bacterial ribosomal protein bL19 family.

Its function is as follows. This protein is located at the 30S-50S ribosomal subunit interface and may play a role in the structure and function of the aminoacyl-tRNA binding site. The protein is Large ribosomal subunit protein bL19 of Azotobacter vinelandii (strain DJ / ATCC BAA-1303).